The following is a 213-amino-acid chain: N-(5'-phosphoribosyl)anthranilate isomerase (213 aa).

Belongs to the TrpF family.

The catalysed reaction is N-(5-phospho-beta-D-ribosyl)anthranilate = 1-(2-carboxyphenylamino)-1-deoxy-D-ribulose 5-phosphate. It participates in amino-acid biosynthesis; L-tryptophan biosynthesis; L-tryptophan from chorismate: step 3/5. This Methanocella arvoryzae (strain DSM 22066 / NBRC 105507 / MRE50) protein is N-(5'-phosphoribosyl)anthranilate isomerase.